The sequence spans 341 residues: Glyceraldehyde-3-phosphate dehydrogenase 2 (341 aa).

NAD(+) is bound by residues 12 to 13, R78, and T120; that span reads RI. D-glyceraldehyde 3-phosphate is bound by residues 152-154 and T183; that span reads SCT. C153 acts as the Nucleophile in catalysis. NAD(+) is bound at residue N184. D-glyceraldehyde 3-phosphate contacts are provided by residues R198, 211-212, and R234; that span reads TG. N313 provides a ligand contact to NAD(+).

The protein belongs to the glyceraldehyde-3-phosphate dehydrogenase family. As to quaternary structure, homotetramer.

The protein resides in the cytoplasm. It catalyses the reaction D-glyceraldehyde 3-phosphate + phosphate + NAD(+) = (2R)-3-phospho-glyceroyl phosphate + NADH + H(+). Its pathway is carbohydrate degradation; glycolysis; pyruvate from D-glyceraldehyde 3-phosphate: step 1/5. In terms of biological role, catalyzes the oxidative phosphorylation of glyceraldehyde 3-phosphate (G3P) to 1,3-bisphosphoglycerate (BPG) using the cofactor NAD. The first reaction step involves the formation of a hemiacetal intermediate between G3P and a cysteine residue, and this hemiacetal intermediate is then oxidized to a thioester, with concomitant reduction of NAD to NADH. The reduced NADH is then exchanged with the second NAD, and the thioester is attacked by a nucleophilic inorganic phosphate to produce BPG. This is Glyceraldehyde-3-phosphate dehydrogenase 2 (gapA2) from Staphylococcus aureus (strain COL).